Reading from the N-terminus, the 125-residue chain is Small ribosomal subunit protein uS12 (125 aa).

The tract at residues 1–27 (MPTINQLVRKGREKGEQKSTAPALKSC) is disordered. At D89 the chain carries 3-methylthioaspartic acid. The disordered stretch occupies residues 103 to 125 (DASGVQKRNQGRSKYGTKRPKKK). The segment covering 111-125 (NQGRSKYGTKRPKKK) has biased composition (basic residues).

This sequence belongs to the universal ribosomal protein uS12 family. In terms of assembly, part of the 30S ribosomal subunit. Contacts proteins S8 and S17. May interact with IF1 in the 30S initiation complex.

Its function is as follows. With S4 and S5 plays an important role in translational accuracy. Functionally, interacts with and stabilizes bases of the 16S rRNA that are involved in tRNA selection in the A site and with the mRNA backbone. Located at the interface of the 30S and 50S subunits, it traverses the body of the 30S subunit contacting proteins on the other side and probably holding the rRNA structure together. The combined cluster of proteins S8, S12 and S17 appears to hold together the shoulder and platform of the 30S subunit. The protein is Small ribosomal subunit protein uS12 of Syntrophomonas wolfei subsp. wolfei (strain DSM 2245B / Goettingen).